A 356-amino-acid chain; its full sequence is Peptidyl-prolyl isomerase CWC27 (356 aa).

The 201-residue stretch at 5–205 folds into the PPIase cyclophilin-type domain; sequence TTAKVVLTTT…KPKRKLQVNH (201 aa). Disordered regions lie at residues 172 to 214, 234 to 266, and 279 to 331; these read KAGA…EEPV, NVAK…DAED, and LEKF…EDDD. Over residues 181–192 the composition is skewed to basic and acidic residues; the sequence is AESRENKSGSRD. The segment covering 193–202 has biased composition (basic residues); the sequence is RPKKPKRKLQ. Residues 279–294 are compositionally biased toward basic and acidic residues; it reads LEKFRNMSRTKPDTKP.

It belongs to the cyclophilin-type PPIase family. CWC27 subfamily. As to quaternary structure, associated with the spliceosome.

It localises to the cytoplasm. It is found in the nucleus. It catalyses the reaction [protein]-peptidylproline (omega=180) = [protein]-peptidylproline (omega=0). Functionally, PPIases accelerate the folding of proteins. It catalyzes the cis-trans isomerization of proline imidic peptide bonds in oligopeptides. Involved in pre-mRNA splicing. The chain is Peptidyl-prolyl isomerase CWC27 (CWC27) from Yarrowia lipolytica (strain CLIB 122 / E 150) (Yeast).